The sequence spans 847 residues: Matrin-3 (847 aa).

Serine 2 carries the N-acetylserine modification. An N6-acetyllysine; alternate modification is found at lysine 3. Lysine 3 is covalently cross-linked (Glycyl lysine isopeptide (Lys-Gly) (interchain with G-Cter in SUMO2); alternate). A phosphoserine mark is found at serine 4, serine 9, serine 11, serine 14, serine 22, serine 41, serine 118, and serine 126. Glycyl lysine isopeptide (Lys-Gly) (interchain with G-Cter in SUMO2) cross-links involve residues lysine 132 and lysine 146. Disordered stretches follow at residues 146-174 (KRRR…YRVP) and 187-214 (DSFD…SGYY). Residue threonine 150 is modified to Phosphothreonine. The residue at position 157 (serine 157) is a Phosphoserine. The residue at position 158 (tyrosine 158) is a Phosphotyrosine. A compositionally biased stretch (basic and acidic residues) spans 160–174 (RDGRSATREPPYRVP). 3 positions are modified to phosphoserine: serine 164, serine 188, and serine 195. Residues 201–214 (DYDHGSRSQESGYY) show a composition bias toward basic and acidic residues. Tyrosine 202 is subject to Phosphotyrosine. Phosphoserine is present on residues serine 206, serine 208, and serine 211. Tyrosine 219 bears the Phosphotyrosine mark. At serine 234 the chain carries Phosphoserine. Lysine 245 participates in a covalent cross-link: Glycyl lysine isopeptide (Lys-Gly) (interchain with G-Cter in SUMO2). Serine 264 carries the post-translational modification Phosphoserine. Residue lysine 269 forms a Glycyl lysine isopeptide (Lys-Gly) (interchain with G-Cter in SUMO2) linkage. Position 275 is a phosphoserine (serine 275). Positions 342-394 (PFMLQQSTNPAPGILGPPPPSFHLGGPAVGPRGNLGAGNGNLQGPRHMQKGRV) are disordered. Residues 398 to 473 (RVVHIMDFQR…KPVRVHLSQK (76 aa)) form the RRM 1 domain. Residues lysine 478, lysine 487, and lysine 491 each participate in a glycyl lysine isopeptide (Lys-Gly) (interchain with G-Cter in SUMO2) cross-link. An RRM 2 domain is found at 496-571 (RVIHLSNLPH…RCVKVDLSEK (76 aa)). Serine 509 and serine 511 each carry phosphoserine. Lysine 515 is covalently cross-linked (Glycyl lysine isopeptide (Lys-Gly) (interchain with G-Cter in SUMO2)). An N6-acetyllysine; alternate modification is found at lysine 522. Residue lysine 522 forms a Glycyl lysine isopeptide (Lys-Gly) (interchain with G-Cter in SUMO2); alternate linkage. Residue serine 533 is modified to Phosphoserine. Glycyl lysine isopeptide (Lys-Gly) (interchain with G-Cter in SUMO2) cross-links involve residues lysine 554 and lysine 555. N6-acetyllysine is present on lysine 571. Positions 588-786 (KKDKSRKRSY…DEYRIGPYQP (199 aa)) are disordered. 4 positions are modified to phosphoserine: serine 596, serine 598, serine 604, and serine 606. Positions 600-643 (DGKESPSDKKSKTDGSQKTESSTEGKEQEEKSGEDGEKDTKDDQ) are enriched in basic and acidic residues. Glycyl lysine isopeptide (Lys-Gly) (interchain with G-Cter in SUMO2) cross-links involve residues lysine 617 and lysine 630. The span at 653-665 (ESEDELLVDEEEA) shows a compositional bias: acidic residues. Serine 654, serine 671, serine 673, and serine 674 each carry phosphoserine. Residues 666–676 (AALLESGSSVG) are compositionally biased toward low complexity. Threonine 679 is subject to Phosphothreonine. Position 689 is a phosphoserine (serine 689). Basic and acidic residues predominate over residues 689–704 (SDGKKEPSDKAVKKDG). A Nuclear localization signal motif is present at residues 710–718 (AKKKLKKVD). Residues lysine 719 and lysine 736 each participate in a glycyl lysine isopeptide (Lys-Gly) (interchain with G-Cter in SUMO2) cross-link. Threonine 741 bears the Phosphothreonine mark. Phosphoserine is present on residues serine 747, serine 759, and serine 766. The segment covering 767 to 780 (DENKDDYTIPDEYR) has biased composition (basic and acidic residues). Lysine 770 participates in a covalent cross-link: Glycyl lysine isopeptide (Lys-Gly) (interchain with G-Cter in SUMO2). The segment at 801–832 (FYCKLCSLFYTNEEVAKNTHCSSLPHYQKLKK) adopts a Matrin-type zinc-finger fold. Lysine 836 is subject to N6-acetyllysine; alternate. Lysine 836 participates in a covalent cross-link: Glycyl lysine isopeptide (Lys-Gly) (interchain with G-Cter in SUMO2); alternate.

In terms of assembly, part of a complex consisting of SFPQ, NONO and MATR3. Interacts with AGO1 and AGO2. Part of a complex composed at least of ASH2L, EMSY, HCFC1, HSPA8, CCAR2, MATR3, MKI67, RBBP5, TUBB2A, WDR5 and ZNF335; this complex may have a histone H3-specific methyltransferase activity. Interacts with TARDBP. Part of the HDP-RNP complex composed of at least HEXIM1, PRKDC, XRCC5, XRCC6, paraspeckle proteins (SFPQ, NONO, PSPC1, RBM14, and MATR3) and NEAT1 RNA. Interacts with FUS. Interacts with IGF2BP1; the interaction is enhanced by SEPIN14P20 peptide RBPR. Interacts with IGF2BP2 and IGF2BP3. Interacts with RBPMS.

The protein localises to the nucleus matrix. In terms of biological role, may play a role in transcription or may interact with other nuclear matrix proteins to form the internal fibrogranular network. In association with the SFPQ-NONO heteromer may play a role in nuclear retention of defective RNAs. Plays a role in the regulation of DNA virus-mediated innate immune response by assembling into the HDP-RNP complex, a complex that serves as a platform for IRF3 phosphorylation and subsequent innate immune response activation through the cGAS-STING pathway. Binds to N6-methyladenosine (m6A)-containing mRNAs and contributes to MYC stability by binding to m6A-containing MYC mRNAs. May bind to specific miRNA hairpins. The polypeptide is Matrin-3 (MATR3) (Homo sapiens (Human)).